The chain runs to 423 residues: Type II methyltransferase M.NlaIV (423 aa).

The region spanning 4-423 is the SAM-dependent MTase C5-type domain; sequence IKFIDLFSGM…AVSERLLHTL (420 aa). Cys-80 is an active-site residue.

This sequence belongs to the class I-like SAM-binding methyltransferase superfamily. C5-methyltransferase family.

The catalysed reaction is a 2'-deoxycytidine in DNA + S-adenosyl-L-methionine = a 5-methyl-2'-deoxycytidine in DNA + S-adenosyl-L-homocysteine + H(+). Its function is as follows. A methylase that recognizes the double-stranded sequence 5'-GGNNCC-3', methylates C-? on both strands, and protects the DNA from cleavage by the NlaIV endonuclease. In Neisseria lactamica, this protein is Type II methyltransferase M.NlaIV (nlaIVM).